Reading from the N-terminus, the 110-residue chain is Small ribosomal subunit protein eS25 (110 aa).

The interval 1–37 (MGGASKKPISTMEKRLKKEAEKQQKAEEKKKGPSKTG) is disordered. Positions 12–37 (MEKRLKKEAEKQQKAEEKKKGPSKTG) are enriched in basic and acidic residues.

It belongs to the eukaryotic ribosomal protein eS25 family.

This is Small ribosomal subunit protein eS25 (rps25e) from Saccharolobus solfataricus (strain ATCC 35092 / DSM 1617 / JCM 11322 / P2) (Sulfolobus solfataricus).